We begin with the raw amino-acid sequence, 188 residues long: Large ribosomal subunit protein bL32m (188 aa).

Residues C110, C113, C123, and C126 each contribute to the Zn(2+) site. The segment at 164 to 188 (TPSEQDQGKRIIERDRKRPSWFTQN) is disordered. A compositionally biased stretch (basic and acidic residues) spans 169–181 (DQGKRIIERDRKR).

The protein belongs to the bacterial ribosomal protein bL32 family. Component of the mitochondrial large ribosomal subunit (mt-LSU). Mature mammalian 55S mitochondrial ribosomes consist of a small (28S) and a large (39S) subunit. The 28S small subunit contains a 12S ribosomal RNA (12S mt-rRNA) and 30 different proteins. The 39S large subunit contains a 16S rRNA (16S mt-rRNA), a copy of mitochondrial valine transfer RNA (mt-tRNA(Val)), which plays an integral structural role, and 52 different proteins. bL32m has a zinc binding site. Post-translationally, MRPL32 precursor is processed by the m-AAA protease (composed of AFG3L2 and SPG7), which cleaves the N-terminal transit peptide. Cleavage by the m-AAA protease takes place prior to assembly into the large subunit, an essential step for mitochondrial ribosome (mitoribosome) assembly. Proper processing by the m-AAA protease is dependent on the zinc-binding region within the tightly folded C-terminal domain of MRPL32: zinc-dependent folding halts degradation initiated from the N-terminus and triggers the release of mature MRPL32.

The protein localises to the mitochondrion. Component of the mitochondrial large ribosomal subunit (mt-LSU). The mitochondrial ribosome (mitoribosome) is a large ribonucleoprotein complex responsible for the synthesis of proteins inside mitochondria. In Homo sapiens (Human), this protein is Large ribosomal subunit protein bL32m (MRPL32).